Consider the following 584-residue polypeptide: DNA mismatch repair protein MutL (584 aa).

It belongs to the DNA mismatch repair MutL/HexB family.

Functionally, this protein is involved in the repair of mismatches in DNA. It is required for dam-dependent methyl-directed DNA mismatch repair. May act as a 'molecular matchmaker', a protein that promotes the formation of a stable complex between two or more DNA-binding proteins in an ATP-dependent manner without itself being part of a final effector complex. The sequence is that of DNA mismatch repair protein MutL from Buchnera aphidicola subsp. Acyrthosiphon pisum (strain 5A).